Here is a 271-residue protein sequence, read N- to C-terminus: Phosphate import ATP-binding protein PstB 2 (271 aa).

A disordered region spans residues 1–20 (MLTKKPEINTILQTTPDPHS). An ABC transporter domain is found at 25–266 (MATEDLHVYY…PQEKQTEDYI (242 aa)). 57–64 (GPSGCGKS) provides a ligand contact to ATP.

This sequence belongs to the ABC transporter superfamily. Phosphate importer (TC 3.A.1.7) family. The complex is composed of two ATP-binding proteins (PstB), two transmembrane proteins (PstC and PstA) and a solute-binding protein (PstS).

The protein resides in the cell membrane. The catalysed reaction is phosphate(out) + ATP + H2O = ADP + 2 phosphate(in) + H(+). Part of the ABC transporter complex PstSACB involved in phosphate import. Responsible for energy coupling to the transport system. This Listeria innocua serovar 6a (strain ATCC BAA-680 / CLIP 11262) protein is Phosphate import ATP-binding protein PstB 2.